The primary structure comprises 208 residues: Small ribosomal subunit protein uS4 (208 aa).

The region spanning 98-159 (RRLDNVVYRL…KSRKIVSIND (62 aa)) is the S4 RNA-binding domain.

It belongs to the universal ribosomal protein uS4 family. In terms of assembly, part of the 30S ribosomal subunit. Contacts protein S5. The interaction surface between S4 and S5 is involved in control of translational fidelity.

Functionally, one of the primary rRNA binding proteins, it binds directly to 16S rRNA where it nucleates assembly of the body of the 30S subunit. With S5 and S12 plays an important role in translational accuracy. This Pelobacter propionicus (strain DSM 2379 / NBRC 103807 / OttBd1) protein is Small ribosomal subunit protein uS4.